Here is a 775-residue protein sequence, read N- to C-terminus: Chloride channel protein CLC-a (775 aa).

Residues 1–28 (MDEDGNLQISNSNYNGEEEGEDPENNTL) form a disordered region. 12 helical membrane passes run 88 to 108 (TLACLVGLFTGLIATLINLAV), 131 to 151 (GLMVFTGANLGLTLVATVLVV), 178 to 198 (FGFTTMMVKIVGSIGAVAAGL), 206 to 226 (LVHIGSCIASLLGQGGPDNHR), 248 to 268 (GSASGVCAAFRSPVGGVLFAL), 278 to 298 (ALLWRTFFSTAVVVVVLRAFI), 328 to 348 (AADIIPVTLIGVFGGILGSLY), 371 to 391 (VLLSLGVSLFTSVCLFGLPFL), 453 to 473 (MVSLWIFFGLYCILGLITFGI), 478 to 498 (GLFLPIILMGSAYGRMLGTAM), 510 to 530 (AVLGAASLMAGSMRMTVSLCV), and 531 to 551 (IFLELTNNLLLLPITMFVLLI). CBS domains lie at 595 to 658 (AKPP…FLNE) and 703 to 768 (TNTT…HLDK). The chain crosses the membrane as a helical span at residues 730-750 (HLLVVPKIQASGMSPVIGILT).

This sequence belongs to the chloride channel (TC 2.A.49) family. As to quaternary structure, homodimer. Interacts with PP2A5. Broadly expressed in the plant.

Its subcellular location is the membrane. In terms of biological role, voltage-gated chloride channel that could play a role in the regulation of nitrate content. The chain is Chloride channel protein CLC-a (CLC-A) from Arabidopsis thaliana (Mouse-ear cress).